A 1199-amino-acid chain; its full sequence is DNA-directed RNA polymerase subunit beta' (1199 aa).

Residues C60, C62, C75, and C78 each contribute to the Zn(2+) site. Positions 449, 451, and 453 each coordinate Mg(2+). The Zn(2+) site is built by C818, C892, C899, and C902.

Belongs to the RNA polymerase beta' chain family. As to quaternary structure, RNAP is composed of a core of 2 alpha, a beta and a beta' subunit. The core is associated with a delta subunit, and at least one of epsilon or omega. When a sigma factor is associated with the core the holoenzyme is formed, which can initiate transcription. The cofactor is Mg(2+). Zn(2+) is required as a cofactor.

The catalysed reaction is RNA(n) + a ribonucleoside 5'-triphosphate = RNA(n+1) + diphosphate. Functionally, DNA-dependent RNA polymerase catalyzes the transcription of DNA into RNA using the four ribonucleoside triphosphates as substrates. The polypeptide is DNA-directed RNA polymerase subunit beta' (Bacillus subtilis (strain 168)).